A 276-amino-acid chain; its full sequence is NH(3)-dependent NAD(+) synthetase (276 aa).

43 to 50 (GISGGVDS) is an ATP binding site. Asp49 is a binding site for Mg(2+). Arg146 contributes to the deamido-NAD(+) binding site. Residue Thr166 participates in ATP binding. Mg(2+) is bound at residue Glu171. Residues Lys179 and Asp186 each contribute to the deamido-NAD(+) site. ATP-binding residues include Lys195 and Thr217. Deamido-NAD(+) is bound at residue 266–267 (HK).

This sequence belongs to the NAD synthetase family. In terms of assembly, homodimer.

The catalysed reaction is deamido-NAD(+) + NH4(+) + ATP = AMP + diphosphate + NAD(+) + H(+). The protein operates within cofactor biosynthesis; NAD(+) biosynthesis; NAD(+) from deamido-NAD(+) (ammonia route): step 1/1. Catalyzes the ATP-dependent amidation of deamido-NAD to form NAD. Uses ammonia as a nitrogen source. The chain is NH(3)-dependent NAD(+) synthetase from Shewanella sediminis (strain HAW-EB3).